The chain runs to 328 residues: MASAQDGSMEEILWRSPAHVQMMGGFLHSNNILFYFAESPFFDATSNNASLAIQANYNETLRHFVETREAFEGRLKTMQGLEFVVAYDPLQAAAQTETSFAHEPSNIWVIRKQTRRKRAGLEDEVVVLSTYFVVGDCIYMAPSVASVVGNRLLSAVTSLTSLLKTASSLPSFTPSHGHTYLPPAPKPTDSSQPGAQSQQSKENTPMPDADSTKALLVGPQTANAGAILQDTRTFAESFSLLARYGEEFMDENPLVGEPGSFILSKSGDTDRGAASKQPSNVNRPGSIPGKVGTPQVKVDTPGKTPEKGATPSASDDSKIRKKKAKIGN.

2 disordered regions span residues 173-212 (TPSH…ADST) and 251-328 (ENPL…KIGN). The segment covering 188-203 (TDSSQPGAQSQQSKEN) has biased composition (polar residues). Basic residues predominate over residues 319 to 328 (IRKKKAKIGN).

Belongs to the Mediator complex subunit 6 family. Component of the Mediator complex.

It is found in the nucleus. Its function is as follows. Component of the Mediator complex, a coactivator involved in the regulated transcription of nearly all RNA polymerase II-dependent genes. Mediator functions as a bridge to convey information from gene-specific regulatory proteins to the basal RNA polymerase II transcription machinery. Mediator is recruited to promoters by direct interactions with regulatory proteins and serves as a scaffold for the assembly of a functional preinitiation complex with RNA polymerase II and the general transcription factors. This Aspergillus oryzae (strain ATCC 42149 / RIB 40) (Yellow koji mold) protein is Mediator of RNA polymerase II transcription subunit 6 (med6).